Consider the following 1368-residue polypeptide: MQYSFTEKKRIRKSFAKRSIVHQVPFLLATQLESFSTFLQADVPTAQRKSEGLQAAFTSVFPIVSHNGFARLEFVSYALSSPAFNIKECQQRGLTYCSALRAKVRLVLLDKESPSKSVVKEVKEQEVYMGEIPLMTPTGSFVINGTERVIVSQLHRSPGVFFEHDKGKTHSSGKLLFSARIIPYRGSWLDFEFDPKDVLYFRVDRRRKMPVTILLKAIGLTPEQILANFFVFDNFTLMDEGAQMEFVPERLRGEVARFDITDREGKVIVQKDKRINAKHIRDLEAAKTKYISVPEDYLLGRVLAKNVVDGDTGEVIANANDEITEGVLEKLREAKIKEIQTLYTNDLDQGPYISSTLRVDETVDKTAARIAIYRMMRPGEPPTEEAVEALFNRLFYSEDAYDLSKVGRMKFNRRVGRDEITGPMTLQDDDILATIKILVELRNGKGEVDDIDHLGNRRVRCVGELAENQFRAGLVRVERAVKERLGQAESENLMPHDLINSKPISSAIREFFGSSQLSQFMDQTNPLSEITHKRRVSALGPGGLTRERAGFEVRDVHPTHYGRVCPIETPEGPNIGLINSLALYAHLNEYGFLETPYRKVVDSKVTDQIDYLSAIEEGRYMIAQANAAIGDDGALVDELVSSREAGETMMVTPDRIQYMDVAPSQIVSVAASLIPFLEHDDANRALMGSNMQRQAVPCLRPEKPVVGTGIERTVAVDSGTTVQALRGGVVDYVDAGRIVIRVNDDEAVAGEVGVDIYNLIKYTRSNQNTNINQRPIVKMGDKVSRGDVLADGASTDLGELALGQNMLIAFMPWNGYNFEDSILISERVVADDRYTSIHIEELNVVARDTKLGPEEITRDISNLAEVQLGRLDESGIVYIGAEVEAGDVLVGKVTPKGETQLTPEEKLLRAIFGEKASDVKDTSLRVPSGMSGTVIDVQVFTREGIQRDKRAQQIIDDELKRYRLDLNDQLRIVEGDAFQRLARMLVGKVANGGPKKLAKGTKIDQAYLEDLDHYHWFDIRLADDEAAVQLEAIKNSIEEKRHQFDLAFEEKRKKLTQGDELPPGVLKMVKVYLAVKRRLQPGDKMAGRHGNKGVVSKIVPVEDMPYMADGRPADVVLNPLGVPSRMNVGQVLEVHLGWAAKGLGWRIGEMLARQTKIEELRVFLTKIYNESGRAEDLESFSDDEILELAKNLREGVPFATPVFDGATEEEMSKMLDLAFPDDIAEQLDMNPSKNQVRLYDGRTGEPFERRVTVGYMHYLKLHHLVDDKMHARSTGPYSLVTQQPLGGKAQFGGQRFGEMEVWALEAYGASYVLQEMLTVKSDDVTGRTKVYENLVKGDHVIDAGMPESFNVLVKEIRSLGIDIDLDRN.

It belongs to the RNA polymerase beta chain family. The RNAP catalytic core consists of 2 alpha, 1 beta, 1 beta' and 1 omega subunit. When a sigma factor is associated with the core the holoenzyme is formed, which can initiate transcription.

The catalysed reaction is RNA(n) + a ribonucleoside 5'-triphosphate = RNA(n+1) + diphosphate. DNA-dependent RNA polymerase catalyzes the transcription of DNA into RNA using the four ribonucleoside triphosphates as substrates. The polypeptide is DNA-directed RNA polymerase subunit beta (Burkholderia mallei (strain SAVP1)).